The sequence spans 320 residues: Mitochondrial fission regulator 1-like-B (320 aa).

Residues 1 to 37 are disordered; it reads MASLGAAAEPERSLFGKDGAEACESPEGRRSGRRKRT. Basic and acidic residues predominate over residues 9–30; the sequence is EPERSLFGKDGAEACESPEGRR.

The protein belongs to the MTFR1 family.

It localises to the mitochondrion outer membrane. Mitochondrial protein required for adaptation of miochondrial dynamics to metabolic changes. Regulates mitochondrial morphology at steady state and mediates AMPK-dependent stress-induced mitochondrial fragmentation via the control of OPA1 levels. The protein is Mitochondrial fission regulator 1-like-B (mtfr1l-b) of Xenopus laevis (African clawed frog).